A 173-amino-acid chain; its full sequence is Lens fiber membrane intrinsic protein (173 aa).

Topologically, residues 1-3 (MYS) are cytoplasmic. Residues 4 to 24 (FMGGGLFCAWVGTILLVVATA) traverse the membrane as a helical segment. The Extracellular segment spans residues 25–66 (TDHWMQYRLSGSFAHQGLWRYCLGNKCFLQTESIAYWNATRA). C-linked (Man) tryptophan glycans are attached at residues tryptophan 43 and tryptophan 61. An N-linked (GlcNAc...) asparagine glycan is attached at asparagine 62. Residues 67-87 (FMILSALCATSGIIMGVLAFA) traverse the membrane as a helical segment. At 88 to 98 (QQSTFTRLSRP) the chain is on the cytoplasmic side. The chain crosses the membrane as a helical span at residues 99-119 (FSAGIMFFASTLFVLLALAIY). At 120–140 (TGVTVSFLGRRFGDWRFSWSY) the chain is on the extracellular side. A helical transmembrane segment spans residues 141-161 (ILGWVALLMTFFAGIFYMCAY). At 162–173 (RMHECRRLATPR) the chain is on the cytoplasmic side. Threonine 171 bears the Phosphothreonine mark.

Belongs to the PMP-22/EMP/MP20 family. In terms of assembly, seems to be associated with itself or another lens membrane component via disulfide bonds.

It is found in the membrane. In terms of biological role, present in the thicker 16-17 nm junctions of mammalian lens fiber cells, where it may contribute to cell junctional organization. Acts as a receptor for calmodulin. May play an important role in both lens development and cataractogenesis. The protein is Lens fiber membrane intrinsic protein (Lim2) of Mus musculus (Mouse).